The chain runs to 187 residues: Elongation factor P 2 (187 aa).

This sequence belongs to the elongation factor P family.

It is found in the cytoplasm. The protein operates within protein biosynthesis; polypeptide chain elongation. Functionally, involved in peptide bond synthesis. Stimulates efficient translation and peptide-bond synthesis on native or reconstituted 70S ribosomes in vitro. Probably functions indirectly by altering the affinity of the ribosome for aminoacyl-tRNA, thus increasing their reactivity as acceptors for peptidyl transferase. This Geobacter sulfurreducens (strain ATCC 51573 / DSM 12127 / PCA) protein is Elongation factor P 2.